Consider the following 257-residue polypeptide: 4-diphosphocytidyl-2-C-methyl-D-erythritol kinase (257 aa).

Residue lysine 8 is part of the active site. ATP is bound at residue 91–101 (PMGGGLGGGSA). Aspartate 131 is a catalytic residue.

Belongs to the GHMP kinase family. IspE subfamily.

The enzyme catalyses 4-CDP-2-C-methyl-D-erythritol + ATP = 4-CDP-2-C-methyl-D-erythritol 2-phosphate + ADP + H(+). Its pathway is isoprenoid biosynthesis; isopentenyl diphosphate biosynthesis via DXP pathway; isopentenyl diphosphate from 1-deoxy-D-xylulose 5-phosphate: step 3/6. In terms of biological role, catalyzes the phosphorylation of the position 2 hydroxy group of 4-diphosphocytidyl-2C-methyl-D-erythritol. This is 4-diphosphocytidyl-2-C-methyl-D-erythritol kinase from Petrotoga mobilis (strain DSM 10674 / SJ95).